The sequence spans 202 residues: Glycerol-3-phosphate acyltransferase (202 aa).

6 helical membrane passes run 2-22 (MIIV…GFVI), 54-74 (FLVT…PLWL), 85-105 (FFTN…YPVY), 120-140 (VVLG…FIVL), 141-161 (KIFK…VIGS), and 162-182 (LIIQ…ILII).

The protein belongs to the PlsY family. Probably interacts with PlsX.

The protein resides in the cell membrane. The enzyme catalyses an acyl phosphate + sn-glycerol 3-phosphate = a 1-acyl-sn-glycero-3-phosphate + phosphate. The protein operates within lipid metabolism; phospholipid metabolism. Its function is as follows. Catalyzes the transfer of an acyl group from acyl-phosphate (acyl-PO(4)) to glycerol-3-phosphate (G3P) to form lysophosphatidic acid (LPA). This enzyme utilizes acyl-phosphate as fatty acyl donor, but not acyl-CoA or acyl-ACP. The sequence is that of Glycerol-3-phosphate acyltransferase from Staphylococcus aureus (strain Mu3 / ATCC 700698).